We begin with the raw amino-acid sequence, 370 residues long: tRNA-specific 2-thiouridylase MnmA (370 aa).

Residues 14–21 (GMSGGVDS) and Met40 each bind ATP. The tract at residues 100–102 (NPD) is interaction with target base in tRNA. Cys105 (nucleophile) is an active-site residue. Cys105 and Cys205 form a disulfide bridge. Gly129 contributes to the ATP binding site. Positions 155 to 157 (KDQ) are interaction with tRNA. Cys205 functions as the Cysteine persulfide intermediate in the catalytic mechanism. Positions 321–322 (RY) are interaction with tRNA.

It belongs to the MnmA/TRMU family.

It is found in the cytoplasm. The catalysed reaction is S-sulfanyl-L-cysteinyl-[protein] + uridine(34) in tRNA + AH2 + ATP = 2-thiouridine(34) in tRNA + L-cysteinyl-[protein] + A + AMP + diphosphate + H(+). In terms of biological role, catalyzes the 2-thiolation of uridine at the wobble position (U34) of tRNA, leading to the formation of s(2)U34. The chain is tRNA-specific 2-thiouridylase MnmA from Bordetella avium (strain 197N).